A 618-amino-acid chain; its full sequence is DNA mismatch repair protein MutL (618 aa).

Low complexity predominate over residues 366–381 (AEPTAAREPATPRYSG). Residues 366-403 (AEPTAAREPATPRYSGGASGGNGGRQSAGGWPHAQPGY) are disordered. Positions 382–392 (GASGGNGGRQS) are enriched in gly residues.

It belongs to the DNA mismatch repair MutL/HexB family.

Its function is as follows. This protein is involved in the repair of mismatches in DNA. It is required for dam-dependent methyl-directed DNA mismatch repair. May act as a 'molecular matchmaker', a protein that promotes the formation of a stable complex between two or more DNA-binding proteins in an ATP-dependent manner without itself being part of a final effector complex. In Salmonella schwarzengrund (strain CVM19633), this protein is DNA mismatch repair protein MutL.